The primary structure comprises 640 residues: Threonine--tRNA ligase (640 aa).

One can recognise a TGS domain in the interval 1-61 (MPIITLPNGD…TEDSTLQIIT (61 aa)). A catalytic region spans residues 242-533 (DHRKIGKALD…LIEHYAGFMP (292 aa)). The Zn(2+) site is built by Cys-333, His-384, and His-510.

It belongs to the class-II aminoacyl-tRNA synthetase family. In terms of assembly, homodimer. Zn(2+) is required as a cofactor.

It localises to the cytoplasm. The enzyme catalyses tRNA(Thr) + L-threonine + ATP = L-threonyl-tRNA(Thr) + AMP + diphosphate + H(+). Its function is as follows. Catalyzes the attachment of threonine to tRNA(Thr) in a two-step reaction: L-threonine is first activated by ATP to form Thr-AMP and then transferred to the acceptor end of tRNA(Thr). Also edits incorrectly charged L-seryl-tRNA(Thr). This chain is Threonine--tRNA ligase, found in Acinetobacter baumannii (strain SDF).